Consider the following 647-residue polypeptide: Acetyl-coenzyme A synthetase (647 aa).

CoA is bound by residues 190–193 and Thr310; that span reads RGGR. ATP-binding positions include 386–388, 410–415, Asp499, and Arg514; these read GEP and DTWWQT. Ser522 contributes to the CoA binding site. An ATP-binding site is contributed by Arg525. Mg(2+)-binding residues include Val536, His538, and Val541. Arg583 serves as a coordination point for CoA. The residue at position 608 (Lys608) is an N6-acetyllysine.

Belongs to the ATP-dependent AMP-binding enzyme family. The cofactor is Mg(2+). Post-translationally, acetylated. Deacetylation by the SIR2-homolog deacetylase activates the enzyme.

It catalyses the reaction acetate + ATP + CoA = acetyl-CoA + AMP + diphosphate. Its function is as follows. Catalyzes the conversion of acetate into acetyl-CoA (AcCoA), an essential intermediate at the junction of anabolic and catabolic pathways. AcsA undergoes a two-step reaction. In the first half reaction, AcsA combines acetate with ATP to form acetyl-adenylate (AcAMP) intermediate. In the second half reaction, it can then transfer the acetyl group from AcAMP to the sulfhydryl group of CoA, forming the product AcCoA. This Xylella fastidiosa (strain 9a5c) protein is Acetyl-coenzyme A synthetase.